The following is a 450-amino-acid chain: Glutamate--tRNA ligase 2 (450 aa).

Residues 10–20 (PSPTGRIHIGN) carry the 'HIGH' region motif. A 'KMSKS' region motif is present at residues 243–247 (GFSKR). Lysine 246 serves as a coordination point for ATP.

The protein belongs to the class-I aminoacyl-tRNA synthetase family. Glutamate--tRNA ligase type 1 subfamily. Monomer.

It is found in the cytoplasm. It carries out the reaction tRNA(Glu) + L-glutamate + ATP = L-glutamyl-tRNA(Glu) + AMP + diphosphate. Its function is as follows. Catalyzes the attachment of glutamate to tRNA(Glu) in a two-step reaction: glutamate is first activated by ATP to form Glu-AMP and then transferred to the acceptor end of tRNA(Glu). This Beijerinckia indica subsp. indica (strain ATCC 9039 / DSM 1715 / NCIMB 8712) protein is Glutamate--tRNA ligase 2.